We begin with the raw amino-acid sequence, 348 residues long: MKNLLGCSVKDLENVALNYGQAAFRGRQIYSWLYNYKNRSKSIDEINVLPLNFRNQLKKEGFIFGELILKEKYLANDGTLKLLLNTRDNESVECVGIPTEKRLTACLSSQVGCPMDCKFCATGKEGLKRSLKASEILDQILFIENEMNQKVTNIVFMGMGEPLLNIDELLFSIRSINEDFDVSQRRITVSTVAIPNMIRKLSEMSFQVLGKCQFTLAISLHASNQKTRETIIPSAKNYHIKYIIDDCREFVKKTGRRVSFEYLMLHGVNDKLEHADELSNLIKGFQCHVNLIQYNQIEEVEFKQTPSKNAQLFQNRLSNNGINVSLRKSRGSDRNAACGQLRQNAKIK.

The active-site Proton acceptor is Glu-93. In terms of domain architecture, Radical SAM core spans 99–333 (TEKRLTACLS…VSLRKSRGSD (235 aa)). A disulfide bond links Cys-106 and Cys-338. [4Fe-4S] cluster is bound by residues Cys-113, Cys-117, and Cys-120. Residues 160–161 (GE), Ser-190, 219–221 (SLH), and Asn-295 contribute to the S-adenosyl-L-methionine site. The S-methylcysteine intermediate role is filled by Cys-338.

The protein belongs to the radical SAM superfamily. RlmN family. [4Fe-4S] cluster is required as a cofactor.

It localises to the cytoplasm. It carries out the reaction adenosine(2503) in 23S rRNA + 2 reduced [2Fe-2S]-[ferredoxin] + 2 S-adenosyl-L-methionine = 2-methyladenosine(2503) in 23S rRNA + 5'-deoxyadenosine + L-methionine + 2 oxidized [2Fe-2S]-[ferredoxin] + S-adenosyl-L-homocysteine. It catalyses the reaction adenosine(37) in tRNA + 2 reduced [2Fe-2S]-[ferredoxin] + 2 S-adenosyl-L-methionine = 2-methyladenosine(37) in tRNA + 5'-deoxyadenosine + L-methionine + 2 oxidized [2Fe-2S]-[ferredoxin] + S-adenosyl-L-homocysteine. In terms of biological role, specifically methylates position 2 of adenine 2503 in 23S rRNA and position 2 of adenine 37 in tRNAs. This is Probable dual-specificity RNA methyltransferase RlmN from Prochlorococcus marinus (strain MIT 9515).